Here is a 299-residue protein sequence, read N- to C-terminus: Virginiamycin B lyase (299 aa).

A substrate-binding site is contributed by His-229. Residue Glu-269 participates in Mg(2+) binding. His-271 (proton acceptor) is an active-site residue. Glu-286 contributes to the Mg(2+) binding site.

The protein belongs to the Vgb family. In terms of assembly, monomer. Requires Mg(2+) as cofactor.

In terms of biological role, inactivates the type B streptogramin antibiotics by linearizing the lactone ring at the ester linkage, generating a free phenylglycine carboxylate and converting the threonyl moiety into 2-amino-butenoic acid. The sequence is that of Virginiamycin B lyase from Bordetella parapertussis (strain 12822 / ATCC BAA-587 / NCTC 13253).